The chain runs to 35 residues: Photosystem II reaction center protein M (35 aa).

A helical transmembrane segment spans residues 7-27 (GLLATILVILVPSIFLVILYV).

This sequence belongs to the PsbM family. In terms of assembly, PSII is composed of 1 copy each of membrane proteins PsbA, PsbB, PsbC, PsbD, PsbE, PsbF, PsbH, PsbI, PsbJ, PsbK, PsbL, PsbM, PsbT, PsbX, PsbY, PsbZ, Psb30/Ycf12, peripheral proteins PsbO, CyanoQ (PsbQ), PsbU, PsbV and a large number of cofactors. It forms dimeric complexes.

It is found in the cellular thylakoid membrane. Its function is as follows. One of the components of the core complex of photosystem II (PSII). PSII is a light-driven water:plastoquinone oxidoreductase that uses light energy to abstract electrons from H(2)O, generating O(2) and a proton gradient subsequently used for ATP formation. It consists of a core antenna complex that captures photons, and an electron transfer chain that converts photonic excitation into a charge separation. This subunit is found at the monomer-monomer interface. In Synechococcus sp. (strain JA-3-3Ab) (Cyanobacteria bacterium Yellowstone A-Prime), this protein is Photosystem II reaction center protein M.